A 643-amino-acid chain; its full sequence is uncharacterized protein (643 aa).

Residues Ile-9–Lys-29 form a helical membrane-spanning segment.

Its subcellular location is the membrane. This is an uncharacterized protein from Methanocaldococcus jannaschii (strain ATCC 43067 / DSM 2661 / JAL-1 / JCM 10045 / NBRC 100440) (Methanococcus jannaschii).